Here is a 367-residue protein sequence, read N- to C-terminus: Auxin efflux carrier component 8 (367 aa).

Residues 1–6 lie on the Extracellular side of the membrane; that stretch reads MISWLD. A helical transmembrane segment spans residues 7-27; sequence IYHVVSATVPLYVSMTLGFLS. Over 28–38 the chain is Cytoplasmic; the sequence is ARHLKLFSPEQ. Residues 39-59 form a helical membrane-spanning segment; that stretch reads CAGINKFVAKFSIPLLSFQII. I51 is a binding site for (indol-3-yl)acetate. Residues 60–69 lie on the Extracellular side of the membrane; sequence SENNPFKMSP. Residues 70-90 form a helical membrane-spanning segment; that stretch reads KLILSDILQKFLVVVVLAMVL. At 91 to 105 the chain is on the cytoplasmic side; it reads RFWHPTGGRGGKLGW. The chain crosses the membrane as a helical span at residues 106-126; it reads VITGLSISVLPNTLILGMPIL. Positions 117 and 119 each coordinate (indol-3-yl)acetate. Over 127–136 the chain is Extracellular; it reads SAIYGDEAAS. A helical transmembrane segment spans residues 137–157; sequence ILEQIVVLQSLIWYTILLFLF. Residue Y150 coordinates (indol-3-yl)acetate. At 158-227 the chain is on the cytoplasmic side; the sequence is ELNAARALPS…LIINPNTYAT (70 aa). The tract at residues 168 to 194 is disordered; that stretch reads SGASLEHTGNDQEEANIEDEPKEEEDE. Residues 178–194 are compositionally biased toward acidic residues; sequence DQEEANIEDEPKEEEDE. Residues 228–248 traverse the membrane as a helical segment; the sequence is LIGIIWATLHFRLGWNLPEMI. The Extracellular portion of the chain corresponds to 249 to 251; sequence DKS. The helical transmembrane segment at 252–272 threads the bilayer; that stretch reads IHLLSDGGLGMAMFSLGLFMA. At 273–288 the chain is on the cytoplasmic side; the sequence is SQSSIIACGTKMAIIT. A helical membrane pass occupies residues 289–309; that stretch reads MLLKFVLGPALMIASAYCIRL. Residues 310–312 lie on the Extracellular side of the membrane; it reads KST. Residues 313 to 333 traverse the membrane as a helical segment; sequence LFKVAILQAALPQGVVPFVFA. (indol-3-yl)acetate contacts are provided by V327 and V328. Residues 334-344 are Cytoplasmic-facing; the sequence is KEYNLHPEIIS. Residues 345–365 form a helical membrane-spanning segment; the sequence is TGVIFGMLIALPTTLAYYFLL. The Extracellular segment spans residues 366–367; the sequence is DL.

Belongs to the auxin efflux carrier (TC 2.A.69.1) family. In terms of assembly, homodimer. Expressed in veins of mature leaves. Strongly expressed in pollen.

It localises to the endoplasmic reticulum membrane. The protein localises to the cell membrane. Auxin efflux carrier activity is competitively inhibited by naptalamate (N-1-naphthylphthalamic acid, NPA). In terms of biological role, acts as a component of the auxin efflux carrier. Component of the intracellular auxin-transport pathway in the male gametophyte. Involved in the regulation of auxin homeostasis in pollen. Involved in the efflux of auxin from the endoplasmic reticulum into the cytoplasm. Binds auxins including indole-3-acetic acid (IAA), naphthaleneacetic acid (NAA) and the herbicide 2,4-dichlorophenoxyacetic acid (2,4-D), but barely indole-3-butyric acid (IBA) and 2-phenylacetic acid (PAA). PIN5 and PIN8 may have an antagonistic/compensatory activity. Involved in the control of vein patterning. Redundantly with PIN6, inhibits the vein-formation-promoting functions of PIN5. PIN5, PIN6, and PIN8 control vein network geometry, but they are expressed in mutually exclusive domains of leaf vascular cells. The polypeptide is Auxin efflux carrier component 8 (Arabidopsis thaliana (Mouse-ear cress)).